The chain runs to 1788 residues: Genome polyprotein (1788 aa).

The interaction with host MAP1LC3A/LC3 stretch occupies residues 1–184 (MMMASKDVVA…LCPLPPIDLR (184 aa)). Residues 58–68 (GRTTPEPTGTA) show a composition bias toward low complexity. The interval 58–86 (GRTTPEPTGTAGPPPKQQRDRPPRTQEEV) is disordered. The segment covering 74–84 (QQRDRPPRTQE) has biased composition (basic and acidic residues). The segment at 185-399 (NMEPASEPTI…ASLLPDFHLQ (215 aa)) is interaction with NTPase. Residues 302 to 399 (HPTQSWSQQT…ASLLPDFHLQ (98 aa)) form an interaction with NS4 region. Host ER membrane association regions lie at residues 319–350 (KLEL…KPLN) and 361–399 (TFMG…FHLQ). The tract at residues 400–575 (GPEDLARDLV…GKTKAAEHLA (176 aa)) is interaction with NS1-2 and NS4 and homooligomerization. Positions 533–698 (RISMARSALA…EQIRRVSPGD (166 aa)) constitute an SF3 helicase domain. 561 to 568 (GPPGIGKT) serves as a coordination point for ATP. The tract at residues 652 to 757 (AIVITTNAPG…AVALTMERQD (106 aa)) is important for mitochondrion targeting. The interval 827–833 (YSLESDG) is functions as endoplasmic reticulum export signal. The segment at 866 to 911 (RAVAYASCIQSAITSILQIAGSALVVNRAVKRMFGTRTATLSLEGP) is host membrane association. The tract at residues 948 to 979 (EEVAHTEIPSATMEGKNKGKNKKGRGRRNNYN) is disordered. Over residues 965-975 (KGKNKKGRGRR) the composition is skewed to basic residues. The tract at residues 988-993 (DEEYEE) is acidic. At Tyr-991 the chain carries O-(5'-phospho-RNA)-tyrosine. The tract at residues 1083 to 1099 (WADDEREVDYNEKISFE) is interaction with host EIF4G. The Peptidase C37 domain maps to 1100-1280 (APPTLWSRVT…QASEGETTLE (181 aa)). Active-site for 3CLpro activity residues include His-1129, Glu-1153, and Cys-1238. Residues 1515-1636 (KYHFDADYTA…STDIEFDPAK (122 aa)) enclose the RdRp catalytic domain. Residues Asp-1519, Asp-1521, Asp-1623, and Glu-1624 each contribute to the Mg(2+) site.

Homodimer. Homooligomer. Interacts with NTPase; this interaction increases the proapoptotic activity of the NTPase and is crucial for the formation of the viral replication complex. Interacts with NS4; this interaction is crucial for the formation of the viral replication complex. Interacts (via N-terminus) with host VAPA. Interacts with host MAP1LC3A/LC3; this interaction does not seem to be linked to host autophagy, but rather plays a role in the formation of viral factories. As to quaternary structure, homooligomer. Interacts with NS1-2; this interaction increases the proapoptotic activity of the NTPase and is crucial for the formation of the viral replication complex. Interacts with NS4; this interaction increases the proapoptotic activity of the NTPase. In terms of assembly, homodimer. Monomer; in solution. Interacts with NTPase; this interaction increases the proapoptotic activity of the NTPase. Interacts with NS1-2; this interaction is crucial for the formation of the viral replication complex. As to quaternary structure, monomer. Interacts with the RNA-directed RNA polymerase; this interaction induces the multimerization of the RdRp and enhances its activity. Interacts with host IEF4G1; this interaction plays a role in translation of viral proteins. In terms of assembly, homohexamer; also forms fibrous hexameric oligomer. Interacts with the viral genome-linked protein; this interaction induces the multimerization of the RdRp and enhances its activity. Mg(2+) is required as a cofactor. The cofactor is Mn(2+). In terms of processing, specific enzymatic cleavages in vivo yield mature proteins. 3CLpro is first autocatalytically cleaved, then processes the whole polyprotein. NS1/2-3 and NS3-4 sites are cleaved rapidly and NS4-5, NS5-6, and NS6-7 sites are processed subsequently and less efficiently. VPg is uridylylated by the polymerase and is covalently attached to the 5'-end of the polyadenylated genomic and subgenomic RNAs. This uridylylated form acts as a nucleotide-peptide primer for the polymerase.

It localises to the host Golgi apparatus membrane. Its subcellular location is the host endoplasmic reticulum membrane. The catalysed reaction is a ribonucleoside 5'-triphosphate + H2O = a ribonucleoside 5'-diphosphate + phosphate + H(+). It catalyses the reaction Endopeptidase with a preference for cleavage when the P1 position is occupied by Glu-|-Xaa and the P1' position is occupied by Gly-|-Yaa.. It carries out the reaction RNA(n) + a ribonucleoside 5'-triphosphate = RNA(n+1) + diphosphate. Its function is as follows. Induces the proliferation of the host smooth ER membranes forming long tubular structures. These remodeled membranes probably form the viral factories that contain the replication complex. May play a role in viral replication by interacting with host VAPA, a vesicle-associated membrane protein that plays a role in SNARE-mediated vesicle fusion. This interaction may target replication complex to intracellular membranes. In terms of biological role, displays NTPase activity, but no helicase activity. Induces the formation of convoluted membranes derived from the host ER. These remodeled membranes probably form the viral factories that contain the replication complex. Initiates host cell death by targeting the mitochondrial outer membrane, leading to the permeabilization of mitochondria, programmed host cell death and viral egress. Probably plays a role in preventing the assembly of host stress granules. Functionally, probable key protein responsible for the formation of membrane alterations by the virus. Induces the formation of convoluted membranes derived from the host ER. These remodeled membranes probably form the viral factories that contain the replication complex. May play a role in targeting replication complex to intracellular membranes. Viral genome-linked protein is covalently linked to the 5'-end of the positive-strand, negative-strand genomic RNAs and subgenomic RNA. Acts as a genome-linked replication primer. May recruit ribosome to viral RNA thereby promoting viral proteins translation. Interacts with host translation initiation complex to allow the translation of viral proteins. Induces the formation of aggregates of RNA-directed RNA polymerase in the presence of RNA. Through its interaction with the viral RNA-directed RNA polymerase, plays a crucial role in enhancing the polymerase activity. Its function is as follows. Processes the polyprotein. 3CLpro-RdRp is first released by autocleavage, then all other proteins are cleaved. May cleave polyadenylate-binding protein thereby inhibiting cellular translation. In terms of biological role, replicates genomic and antigenomic RNA by recognizing replications specific signals. Also transcribes a subgenomic mRNA by initiating RNA synthesis internally on antigenomic RNA. This sgRNA codes for structural proteins. Catalyzes the covalent attachment VPg with viral RNAs. This Southampton virus (strain GI/Human/United Kingdom/Southampton/1991) (SHV) protein is Genome polyprotein.